We begin with the raw amino-acid sequence, 163 residues long: MMLELNGLHAGLRFSSAHIVFGHPTCGVIHGHSYYVDVKLYGERAGDFKFVCDFKIIKKIVKEICDELDHKLILPKNHEHVYYELRDKTLYFKYENKEYSIPVEDVILLPIPSTTAEDLAIYFANEIADRLKNLGFSNINWIEVSINEGIGQGACYRKYLEVK.

H18 is a binding site for Zn(2+). The Proton acceptor role is filled by C26. Residues H30 and H32 each coordinate Zn(2+). Catalysis depends on charge relay system residues H70 and E148.

It belongs to the PTPS family. QueD subfamily. Zn(2+) is required as a cofactor.

It carries out the reaction 7,8-dihydroneopterin 3'-triphosphate + H2O = 6-carboxy-5,6,7,8-tetrahydropterin + triphosphate + acetaldehyde + 2 H(+). The protein operates within purine metabolism; 7-cyano-7-deazaguanine biosynthesis. Functionally, catalyzes the conversion of 7,8-dihydroneopterin triphosphate (H2NTP) to 6-carboxy-5,6,7,8-tetrahydropterin (CPH4) and acetaldehyde. This chain is Putative 6-carboxy-5,6,7,8-tetrahydropterin synthase (queD), found in Methanocaldococcus jannaschii (strain ATCC 43067 / DSM 2661 / JAL-1 / JCM 10045 / NBRC 100440) (Methanococcus jannaschii).